The sequence spans 759 residues: TIR domain-containing adapter molecule 1 (759 aa).

The TRIF-NTD stretch occupies residues 1–153; the sequence is MACTGPSLSG…CGWDVLGDLG (153 aa). Positions 84–91 match the TRAF6-binding motif; the sequence is ETPEEPPD. Residues 207–210 carry the pLxIS motif motif; it reads LEIS. The residue at position 210 (Ser-210) is a Phosphoserine. Residue Lys-229 forms a Glycyl lysine isopeptide (Lys-Gly) (interchain with G-Cter in ubiquitin) linkage. Residues 241-296 are disordered; it reads EPAPMGCQEPEEMSWPPSVEAADSPVRPSSPGPGLPEVTTDACPASPHDPPEVPEI. 2 consecutive short sequence motifs (TRAF6-binding) follow at residues 248 to 255 and 299 to 309; these read QEPEEMSW and HYPVECTDVPA. A disordered region spans residues 340–426; that stretch reads LSAQPRPPTP…PEPPPPELES (87 aa). Over residues 351–365 the composition is skewed to low complexity; that stretch reads VPQTSPSFPSASTSP. Over residues 366 to 376 the composition is skewed to pro residues; that stretch reads FPSPSTPPEAH. The region spanning 430–590 is the TIR domain; the sequence is KFYNFVVLHA…QDARALREQS (161 aa). Positions 549-759 are sufficient to induce apoptosis; sequence LLDEHSKIFA…APEDNTRETE (211 aa). Residues 642–723 are disordered; the sequence is GQGSLGTPPS…PPARPQSPGL (82 aa). The span at 659 to 705 shows a compositional bias: pro residues; that stretch reads HQPPPLPPWLGGTPPPIFPQPPQTFPQPPPTFPQPPPTFQQPPPACP.

In terms of assembly, homodimer. Found in a multi-helicase-TICAM1 complex at least composed of DHX36, DDX1, DDX21 and TICAM1; this complex exists in resting cells with or without poly(I:C) RNA ligand stimulation. Interacts (via TIR domain) with DDX21 (via C-terminus). Interacts (via TIR domain) with DHX36 (via C-terminus). Interacts with AZI2 and IRF7. Interacts with TICAM2 in TLR4 recruitment. Interaction with PIAS4 inhibits the TICAM1-induced NF-kappa-B, IRF and IFNB1 activation. Interacts with IKBKB and IKBKE. Interaction with SARM1 blocks TICAM1-dependent transcription factor activation. Interacts with TRAF3. Interacts (when phosphorylated) with IRF3; following activation and phosphorylation on the pLxIS motif by TBK1, recruits IRF3. Interacts with TBK1, TRAF6 and RIPK1 and these interactions are enhanced in the presence of WDFY1. Interacts with TRAFD1. Interacts with UBQLN1 (via UBA domain). Interacts with TLR4 in response to LPS in a WDFY1-dependent manner. Interacts with WDFY1 in response to poly(I:C). Interacts (via the TIR domain) with TLR3 in response to poly(I:C) and this interaction is enhanced in the presence of WDFY1. Interacts with TRIM56. Component of a multi-helicase-TICAM1 complex that acts as a cytoplasmic sensor of viral double-stranded RNA (dsRNA) and plays a role in the activation of a cascade of antiviral responses including the induction of pro-inflammatory cytokines. Interacts (via the TIR domain) with TLR5. Interacts with TRIM8. Interacts with TAX1BP1 and TRIM32; these interactions target TICAM1 to TAX1BP1-mediated selective autophagic degradation. Interacts with DDX50. Post-translationally, phosphorylated by TBK1. Following activation, phosphorylated by TBK1 at Ser-210 in the pLxIS motif. The phosphorylated pLxIS motif constitutes an IRF3-binding motif, leading to recruitment of the transcription factor IRF3 to induce type-I interferons and other cytokines. In terms of processing, polyubiquitinated at Lys-229 by TRIM38 with 'Lys-48'-linked chains, leading to proteasomal degradation. Polyubiquitinated with 'Lys-6' and 'Lys-33'-linked chains in a TRIM8-dependent manner.

The protein localises to the cytoplasmic vesicle. The protein resides in the autophagosome. It localises to the cytoplasm. It is found in the cytosol. Its subcellular location is the mitochondrion. In terms of biological role, involved in innate immunity against invading pathogens. Adapter used by TLR3, TLR4 (through TICAM2) and TLR5 to mediate NF-kappa-B and interferon-regulatory factor (IRF) activation, and to induce apoptosis. Ligand binding to these receptors results in TRIF recruitment through its TIR domain. Distinct protein-interaction motifs allow recruitment of the effector proteins TBK1, TRAF6 and RIPK1, which in turn, lead to the activation of transcription factors IRF3 and IRF7, NF-kappa-B and FADD respectively. Phosphorylation by TBK1 on the pLxIS motif leads to recruitment and subsequent activation of the transcription factor IRF3 to induce expression of type I interferon and exert a potent immunity against invading pathogens. Component of a multi-helicase-TICAM1 complex that acts as a cytoplasmic sensor of viral double-stranded RNA (dsRNA) and plays a role in the activation of a cascade of antiviral responses including the induction of pro-inflammatory cytokines. In Bos taurus (Bovine), this protein is TIR domain-containing adapter molecule 1 (TICAM1).